The chain runs to 308 residues: Phenylcoumaran benzylic ether reductase PT1 (308 aa).

Residues 11–17 (GATGYIG), Arg36, and Lys46 contribute to the NADP(+) site. The active-site Proton acceptor is Lys134. Arg138 contributes to the NADP(+) binding site.

Belongs to the NmrA-type oxidoreductase family. Isoflavone reductase subfamily.

It catalyses the reaction (-)-dehydrodiconiferyl alcohol + NADPH + H(+) = (S)-isodihydrodehydrodiconiferyl alcohol + NADP(+). It carries out the reaction (+)-dehydrodiconiferyl alcohol + NADPH + H(+) = (R)-isodihydrodehydrodiconiferyl alcohol + NADP(+). The catalysed reaction is (2R,3S)-dihydrodehydrodiconiferyl alcohol + NADPH + H(+) = (S)-tetrahydrodehydrodiconiferyl alcohol + NADP(+). The enzyme catalyses (2S,3R)-dihydrodehydrodiconiferyl alcohol + NADPH + H(+) = (R)-tetrahydrodehydrodiconiferyl alcohol + NADP(+). In terms of biological role, oxidoreductase involved in lignan biosynthesis. Catalyzes the NADPH-dependent reduction of phenylcoumaran benzylic ethers. Converts dehydrodiconiferyl alcohol (DDC) to isodihydrodehydrodiconiferyl alcohol (IDDDC), and dihydrodehydrodiconiferyl alcohol (DDDC) to tetrahydrodehydrodiconiferyl alcohol (TDDC). The sequence is that of Phenylcoumaran benzylic ether reductase PT1 from Pinus taeda (Loblolly pine).